A 305-amino-acid polypeptide reads, in one-letter code: UDP-3-O-acyl-N-acetylglucosamine deacetylase (305 aa).

Residues H79, H238, and D242 each contribute to the Zn(2+) site. The active-site Proton donor is the H265.

Belongs to the LpxC family. The cofactor is Zn(2+).

It carries out the reaction a UDP-3-O-[(3R)-3-hydroxyacyl]-N-acetyl-alpha-D-glucosamine + H2O = a UDP-3-O-[(3R)-3-hydroxyacyl]-alpha-D-glucosamine + acetate. The protein operates within glycolipid biosynthesis; lipid IV(A) biosynthesis; lipid IV(A) from (3R)-3-hydroxytetradecanoyl-[acyl-carrier-protein] and UDP-N-acetyl-alpha-D-glucosamine: step 2/6. Its function is as follows. Catalyzes the hydrolysis of UDP-3-O-myristoyl-N-acetylglucosamine to form UDP-3-O-myristoylglucosamine and acetate, the committed step in lipid A biosynthesis. This chain is UDP-3-O-acyl-N-acetylglucosamine deacetylase, found in Edwardsiella ictaluri (strain 93-146).